The sequence spans 387 residues: MDLVNGLVALSLTHKELGVDELSKVANGVHRVCVSLRQPLFVLHTCNRVEAYLYNPPDEVVEIVKSGYAPYVEKVVERRGVDAARHLFRVAAGLESMLIGETDVLGQLEEAFDRQVRAGYTRELLKTVVERAIRVGKRVRTETGISRGPRGLGSLSILYVKEKIDLTNARVCVIGAGSVGRGLVKELIDAGARRLVVVNRSVEKAADLGVEVWPLSERSVERCLEDFDVVFTAVATFEPIIKSVPRDARVRIIVDMGMPRNTAAGLPVEVVTIDSLRDLADRFNAMRDAEIKKAEEIVEEELVALERLLRIRWVEEVSAKLLEYWFKIAEEEGERAGGLEAKIAARTTVKRTLLPVVNYLKKVAVSDIDEAYRIISVLRLSYGLKDL.

Substrate contacts are provided by residues 45-48 (TCNR), Ser-96, 101-103 (ETD), and Gln-107. The active-site Nucleophile is Cys-46. NADP(+) is bound at residue 175 to 180 (GAGSVG).

The protein belongs to the glutamyl-tRNA reductase family. Homodimer.

It catalyses the reaction (S)-4-amino-5-oxopentanoate + tRNA(Glu) + NADP(+) = L-glutamyl-tRNA(Glu) + NADPH + H(+). It participates in porphyrin-containing compound metabolism; protoporphyrin-IX biosynthesis; 5-aminolevulinate from L-glutamyl-tRNA(Glu): step 1/2. Functionally, catalyzes the NADPH-dependent reduction of glutamyl-tRNA(Glu) to glutamate 1-semialdehyde (GSA). The protein is Glutamyl-tRNA reductase 1 of Pyrobaculum arsenaticum (strain DSM 13514 / JCM 11321 / PZ6).